Reading from the N-terminus, the 416-residue chain is Probable tRNA pseudouridine synthase D (416 aa).

Asp83 functions as the Nucleophile in the catalytic mechanism. Positions 158 to 379 (GFPNYFGYQR…PGGRRELLIR (222 aa)) constitute a TRUD domain.

It belongs to the pseudouridine synthase TruD family.

The enzyme catalyses uridine(13) in tRNA = pseudouridine(13) in tRNA. In terms of biological role, could be responsible for synthesis of pseudouridine from uracil-13 in transfer RNAs. The protein is Probable tRNA pseudouridine synthase D of Thermococcus onnurineus (strain NA1).